A 153-amino-acid chain; its full sequence is Ribosome maturation factor RimP (153 aa).

The protein belongs to the RimP family.

The protein resides in the cytoplasm. Its function is as follows. Required for maturation of 30S ribosomal subunits. The polypeptide is Ribosome maturation factor RimP (Marinomonas sp. (strain MWYL1)).